A 156-amino-acid chain; its full sequence is ATP synthase subunit b (156 aa).

Residues 11 to 31 form a helical membrane-spanning segment; it reads LIAFALFVWFCMKFVWPPIIN.

It belongs to the ATPase B chain family. F-type ATPases have 2 components, F(1) - the catalytic core - and F(0) - the membrane proton channel. F(1) has five subunits: alpha(3), beta(3), gamma(1), delta(1), epsilon(1). F(0) has three main subunits: a(1), b(2) and c(10-14). The alpha and beta chains form an alternating ring which encloses part of the gamma chain. F(1) is attached to F(0) by a central stalk formed by the gamma and epsilon chains, while a peripheral stalk is formed by the delta and b chains.

The protein localises to the cell inner membrane. F(1)F(0) ATP synthase produces ATP from ADP in the presence of a proton or sodium gradient. F-type ATPases consist of two structural domains, F(1) containing the extramembraneous catalytic core and F(0) containing the membrane proton channel, linked together by a central stalk and a peripheral stalk. During catalysis, ATP synthesis in the catalytic domain of F(1) is coupled via a rotary mechanism of the central stalk subunits to proton translocation. Functionally, component of the F(0) channel, it forms part of the peripheral stalk, linking F(1) to F(0). This Haemophilus influenzae (strain PittEE) protein is ATP synthase subunit b.